Consider the following 469-residue polypeptide: ATP synthase subunit beta (469 aa).

156-163 is a binding site for ATP; that stretch reads GGAGVGKT.

This sequence belongs to the ATPase alpha/beta chains family. In terms of assembly, F-type ATPases have 2 components, CF(1) - the catalytic core - and CF(0) - the membrane proton channel. CF(1) has five subunits: alpha(3), beta(3), gamma(1), delta(1), epsilon(1). CF(0) has three main subunits: a(1), b(2) and c(9-12). The alpha and beta chains form an alternating ring which encloses part of the gamma chain. CF(1) is attached to CF(0) by a central stalk formed by the gamma and epsilon chains, while a peripheral stalk is formed by the delta and b chains.

Its subcellular location is the cell membrane. The catalysed reaction is ATP + H2O + 4 H(+)(in) = ADP + phosphate + 5 H(+)(out). In terms of biological role, produces ATP from ADP in the presence of a proton gradient across the membrane. The catalytic sites are hosted primarily by the beta subunits. The sequence is that of ATP synthase subunit beta from Lactococcus lactis subsp. cremoris (strain SK11).